We begin with the raw amino-acid sequence, 116 residues long: uncharacterized protein (116 aa).

Transmembrane regions (helical) follow at residues 8–28 (FMIY…VSFA), 39–59 (GLLL…NPPF), and 75–95 (FLLI…YLMV).

To M.jannaschii MJ1580.

It localises to the cell membrane. This is an uncharacterized protein from Methanothermobacter thermautotrophicus (strain ATCC 29096 / DSM 1053 / JCM 10044 / NBRC 100330 / Delta H) (Methanobacterium thermoautotrophicum).